The following is a 2321-amino-acid chain: Major viral transcription factor ICP4 homolog (2321 aa).

Disordered regions lie at residues 19–183 (GIFP…SPPL), 296–329 (ILHT…PAPI), 350–438 (EFIQ…PSLG), 954–1180 (MDDD…SGLA), 1360–1392 (DNSS…APPH), 1597–1841 (LLND…PSCY), and 2277–2321 (QHEE…TFTD). Residues 114–147 (SSNRPGGRNSSNGADESGESSSDRSPSYSPCDSY) are compositionally biased toward low complexity. Composition is skewed to pro residues over residues 302–329 (PTPP…PAPI) and 355–367 (QSPP…PSPP). The segment covering 368-389 (AHSSSSCSPSHLAPSPLSSSPL) has biased composition (low complexity). Residues 390–410 (SSPPQLSPAPVSPPSSPPPLS) show a composition bias toward pro residues. 2 stretches are compositionally biased toward polar residues: residues 424–433 (SISSQPQSCP) and 1002–1011 (PRLTTPSSGR). The span at 1031–1093 (PETSPSNEHI…PSSPSSSRSP (63 aa)) shows a compositional bias: low complexity. The span at 1151–1161 (GGGRPRGRPPK) shows a compositional bias: basic residues. 2 stretches are compositionally biased toward polar residues: residues 1169–1180 (NDIQVTSSSGLA) and 1371–1389 (SKPS…QTTA). Residues 1630-1644 (STSSSQSASDKSPIK) show a composition bias toward low complexity. Composition is skewed to polar residues over residues 1720–1743 (KAQT…QSSS) and 1801–1816 (VGQT…HDIL). The segment covering 1817–1839 (SSSLPNRSCSSSPSPSKRPYHPS) has biased composition (low complexity).

Belongs to the herpesviridae ICP4 family. A long stretch of serine residues may be a major site of phosphorylation.

The protein resides in the host nucleus. In terms of biological role, this IE protein is a multifunctional protein capable of migrating to the nucleus, binding to DNA, trans-activating other viral genes, and autoregulating its own synthesis. It is required for the switch from immediate-early to early mode of gene expression. The protein is Major viral transcription factor ICP4 homolog (MDV084) of Gallus gallus (Chicken).